The chain runs to 334 residues: Aspartate carbamoyltransferase catalytic subunit (334 aa).

Residues arginine 71 and threonine 72 each coordinate carbamoyl phosphate. Lysine 99 contacts L-aspartate. Carbamoyl phosphate contacts are provided by arginine 121, histidine 151, and glutamine 154. Residues arginine 184 and arginine 239 each contribute to the L-aspartate site. Positions 280 and 281 each coordinate carbamoyl phosphate.

The protein belongs to the aspartate/ornithine carbamoyltransferase superfamily. ATCase family. Heterododecamer (2C3:3R2) of six catalytic PyrB chains organized as two trimers (C3), and six regulatory PyrI chains organized as three dimers (R2).

The catalysed reaction is carbamoyl phosphate + L-aspartate = N-carbamoyl-L-aspartate + phosphate + H(+). It participates in pyrimidine metabolism; UMP biosynthesis via de novo pathway; (S)-dihydroorotate from bicarbonate: step 2/3. Catalyzes the condensation of carbamoyl phosphate and aspartate to form carbamoyl aspartate and inorganic phosphate, the committed step in the de novo pyrimidine nucleotide biosynthesis pathway. This Pseudomonas putida (strain GB-1) protein is Aspartate carbamoyltransferase catalytic subunit.